We begin with the raw amino-acid sequence, 321 residues long: Glycerol-3-phosphate phosphatase (321 aa).

Asp34 serves as the catalytic Nucleophile. Residues Asp34, Asp36, and Asp260 each contribute to the Mg(2+) site. The active-site Proton donor is the Asp36.

It belongs to the HAD-like hydrolase superfamily. CbbY/CbbZ/Gph/YieH family. As to quaternary structure, homodimer. It depends on Mg(2+) as a cofactor. In terms of tissue distribution, expression was confirmed in liver, adipose tissue, testis and pancreatic islet.

The catalysed reaction is O-phospho-L-tyrosyl-[protein] + H2O = L-tyrosyl-[protein] + phosphate. It catalyses the reaction sn-glycerol 1-phosphate + H2O = glycerol + phosphate. It carries out the reaction sn-glycerol 3-phosphate + H2O = glycerol + phosphate. Functionally, glycerol-3-phosphate phosphatase hydrolyzing glycerol-3-phosphate into glycerol. Thereby, regulates the cellular levels of glycerol-3-phosphate a metabolic intermediate of glucose, lipid and energy metabolism. Was also shown to have a 2-phosphoglycolate phosphatase activity and a tyrosine-protein phosphatase activity. However, their physiological relevance is unclear. In vitro, also has a phosphatase activity toward ADP, ATP, GDP and GTP. The polypeptide is Glycerol-3-phosphate phosphatase (Rattus norvegicus (Rat)).